The following is a 77-amino-acid chain: Serine protease inhibitor 2 (77 aa).

Positions 1–17 are cleaved as a signal peptide; the sequence is MMFTPLIVLTLLVLATA. 5 disulfides stabilise this stretch: Cys21-Cys53, Cys30-Cys48, Cys33-Cys44, Cys37-Cys74, and Cys55-Cys68. The 54-residue stretch at 21–74 folds into the TIL domain; sequence CGPNEQWSDCPKCELQCGESDKPCATICGEPKCYCSPDKYRRIPDGRCIRKIQC.

The protein localises to the secreted. Its function is as follows. Defends the organism against the host's proteinases. The protein is Serine protease inhibitor 2 of Anisakis simplex (Herring worm).